The chain runs to 214 residues: Outer-membrane lipoprotein carrier protein (214 aa).

A signal peptide spans 1–23; sequence MNKRITVLSLLLATSLSSAAAMA.

The protein belongs to the LolA family. As to quaternary structure, monomer.

It is found in the periplasm. Functionally, participates in the translocation of lipoproteins from the inner membrane to the outer membrane. Only forms a complex with a lipoprotein if the residue after the N-terminal Cys is not an aspartate (The Asp acts as a targeting signal to indicate that the lipoprotein should stay in the inner membrane). This Shewanella frigidimarina (strain NCIMB 400) protein is Outer-membrane lipoprotein carrier protein.